We begin with the raw amino-acid sequence, 1212 residues long: Myosin-1 (1212 aa).

The disordered stretch occupies residues 1 to 35 (MGITRRGKDKAAAGQAVAGGASGGRARPKKATFET). The 675-residue stretch at 41–715 (VGVSDLTLLS…TLFALEHMRD (675 aa)) folds into the Myosin motor domain. 134 to 141 (GESGAGKT) serves as a coordination point for ATP. Residues 405–487 (SVGILDIYGF…PGVFSALKDA (83 aa)) form an actin-binding region. 2 IQ domains span residues 719–739 (HNMA…RAES) and 740–765 (ATRI…HGHR). The 190-residue stretch at 773–962 (RRRMSILGSR…AVHTQQGEPP (190 aa)) folds into the TH1 domain. 2 disordered regions span residues 947–1064 (DFYK…APPA) and 1115–1212 (PAAY…DDDW). A compositionally biased stretch (polar residues) spans 954 to 966 (VHTQQGEPPNSVS). Low complexity-rich tracts occupy residues 987-998 (RPGGPNGRPARG) and 1008-1052 (PGGA…ASVR). Residues 1053–1062 (APPPPPPAAP) show a composition bias toward pro residues. One can recognise an SH3 domain in the interval 1065-1124 (KAKIMAKVLYDFAGQKENEMSIKEGDLIEIVQKENNGWWLAKSGNQQAWVPAAYVEEQKQ). A compositionally biased stretch (pro residues) spans 1125-1140 (APPPVAASRPPPPAPP). Residues 1171 to 1190 (MSLNGSDGSRSNTPTPSLGN) are compositionally biased toward polar residues.

It belongs to the TRAFAC class myosin-kinesin ATPase superfamily. Myosin family.

It localises to the cytoplasm. The protein localises to the cytoskeleton. It is found in the actin patch. Type-I myosin implicated in the organization of the actin cytoskeleton. Required for proper actin cytoskeleton polarization. At the cell cortex, assembles in patch-like structures together with proteins from the actin-polymerizing machinery and promotes actin assembly. Functions as actin nucleation-promoting factor (NPF) for the Arp2/3 complex. The protein is Myosin-1 (MYO1) of Pyricularia oryzae (strain 70-15 / ATCC MYA-4617 / FGSC 8958) (Rice blast fungus).